The primary structure comprises 355 residues: DNA polymerase IV (355 aa).

The UmuC domain maps to 6 to 187; the sequence is IIHVDMDAFY…LPVGKIHGVG (182 aa). Positions 10 and 105 each coordinate Mg(2+). Glu106 is a catalytic residue.

This sequence belongs to the DNA polymerase type-Y family. Monomer. Mg(2+) is required as a cofactor.

The protein resides in the cytoplasm. The catalysed reaction is DNA(n) + a 2'-deoxyribonucleoside 5'-triphosphate = DNA(n+1) + diphosphate. In terms of biological role, poorly processive, error-prone DNA polymerase involved in untargeted mutagenesis. Copies undamaged DNA at stalled replication forks, which arise in vivo from mismatched or misaligned primer ends. These misaligned primers can be extended by PolIV. Exhibits no 3'-5' exonuclease (proofreading) activity. May be involved in translesional synthesis, in conjunction with the beta clamp from PolIII. This is DNA polymerase IV from Alkalilimnicola ehrlichii (strain ATCC BAA-1101 / DSM 17681 / MLHE-1).